The sequence spans 274 residues: MPMSQANPRKRIALVIQYIGTHFCGWQRQTAERTVQAVIEETISTVVGQKITIHGAGRTDSGVHAAGQFAHFECESLIPGYKWAKILNDRLPPDINIRGACEVSQDWHAQFSAQWRRYRYTIYTHPTPNLFIQPYAWHYYQAPLDETLIQAALTPLLGEHHLAAFQRTGSKRSHAWVNVQAAECSRRGSFIHIEIQANGFLYGMVRLLVGMLVDIGQGKLSLAQFQDIWKNEKRHLVKYSAPAKGLCLLRVGYPEPLFPPHIWFDTQPTFLLTH.

D60 serves as the catalytic Nucleophile. A substrate-binding site is contributed by Y118.

It belongs to the tRNA pseudouridine synthase TruA family. In terms of assembly, homodimer.

The catalysed reaction is uridine(38/39/40) in tRNA = pseudouridine(38/39/40) in tRNA. Functionally, formation of pseudouridine at positions 38, 39 and 40 in the anticodon stem and loop of transfer RNAs. The polypeptide is tRNA pseudouridine synthase A (Picosynechococcus sp. (strain ATCC 27264 / PCC 7002 / PR-6) (Agmenellum quadruplicatum)).